Consider the following 359-residue polypeptide: NADH-quinone oxidoreductase subunit H (359 aa).

Helical transmembrane passes span I19 to L39, F94 to L114, V127 to G147, I175 to M195, F202 to I222, F255 to I275, V301 to L321, and C337 to I357.

Belongs to the complex I subunit 1 family. As to quaternary structure, NDH-1 is composed of 14 different subunits. Subunits NuoA, H, J, K, L, M, N constitute the membrane sector of the complex.

It is found in the cell inner membrane. The enzyme catalyses a quinone + NADH + 5 H(+)(in) = a quinol + NAD(+) + 4 H(+)(out). Its function is as follows. NDH-1 shuttles electrons from NADH, via FMN and iron-sulfur (Fe-S) centers, to quinones in the respiratory chain. The immediate electron acceptor for the enzyme in this species is believed to be ubiquinone. Couples the redox reaction to proton translocation (for every two electrons transferred, four hydrogen ions are translocated across the cytoplasmic membrane), and thus conserves the redox energy in a proton gradient. This subunit may bind ubiquinone. This Chlorobaculum tepidum (strain ATCC 49652 / DSM 12025 / NBRC 103806 / TLS) (Chlorobium tepidum) protein is NADH-quinone oxidoreductase subunit H.